Consider the following 264-residue polypeptide: Thymidylate synthase (264 aa).

Arg21 contacts dUMP. Residue His51 coordinates (6R)-5,10-methylene-5,6,7,8-tetrahydrofolate. 126–127 (RR) is a binding site for dUMP. Catalysis depends on Cys146, which acts as the Nucleophile. DUMP is bound by residues 166-169 (RSAD), Asn177, and 207-209 (HIY). Asp169 is a binding site for (6R)-5,10-methylene-5,6,7,8-tetrahydrofolate. Ala263 serves as a coordination point for (6R)-5,10-methylene-5,6,7,8-tetrahydrofolate.

This sequence belongs to the thymidylate synthase family. Bacterial-type ThyA subfamily. As to quaternary structure, homodimer.

The protein localises to the cytoplasm. The enzyme catalyses dUMP + (6R)-5,10-methylene-5,6,7,8-tetrahydrofolate = 7,8-dihydrofolate + dTMP. It participates in pyrimidine metabolism; dTTP biosynthesis. Functionally, catalyzes the reductive methylation of 2'-deoxyuridine-5'-monophosphate (dUMP) to 2'-deoxythymidine-5'-monophosphate (dTMP) while utilizing 5,10-methylenetetrahydrofolate (mTHF) as the methyl donor and reductant in the reaction, yielding dihydrofolate (DHF) as a by-product. This enzymatic reaction provides an intracellular de novo source of dTMP, an essential precursor for DNA biosynthesis. The polypeptide is Thymidylate synthase (Porphyromonas gingivalis (strain ATCC BAA-308 / W83)).